Consider the following 79-residue polypeptide: Acyl carrier protein (79 aa).

The Carrier domain occupies 2-77 (STIEERVKKI…QAIDYVKAHV (76 aa)). Position 37 is an O-(pantetheine 4'-phosphoryl)serine (Ser37).

This sequence belongs to the acyl carrier protein (ACP) family. Post-translationally, 4'-phosphopantetheine is transferred from CoA to a specific serine of apo-ACP by AcpS. This modification is essential for activity because fatty acids are bound in thioester linkage to the sulfhydryl of the prosthetic group.

It is found in the cytoplasm. Its pathway is lipid metabolism; fatty acid biosynthesis. In terms of biological role, carrier of the growing fatty acid chain in fatty acid biosynthesis. This chain is Acyl carrier protein, found in Xanthomonas axonopodis pv. citri (strain 306).